A 517-amino-acid chain; its full sequence is UDP-N-acetylmuramoyl-L-alanyl-D-glutamate--2,6-diaminopimelate ligase (517 aa).

2 residues coordinate UDP-N-acetyl-alpha-D-muramoyl-L-alanyl-D-glutamate: Leu-34 and Ser-36. An ATP-binding site is contributed by 122 to 128; that stretch reads GTSGKTT. UDP-N-acetyl-alpha-D-muramoyl-L-alanyl-D-glutamate-binding positions include 164 to 165, Ser-191, and Arg-199; that span reads TT. An N6-carboxylysine modification is found at Lys-231. Meso-2,6-diaminopimelate is bound by residues Arg-394, 418-421, Gly-476, and Glu-480; that span reads DNPR. Residues 418–421 carry the Meso-diaminopimelate recognition motif motif; it reads DNPR.

The protein belongs to the MurCDEF family. MurE subfamily. Mg(2+) serves as cofactor. Carboxylation is probably crucial for Mg(2+) binding and, consequently, for the gamma-phosphate positioning of ATP.

The protein resides in the cytoplasm. It catalyses the reaction UDP-N-acetyl-alpha-D-muramoyl-L-alanyl-D-glutamate + meso-2,6-diaminopimelate + ATP = UDP-N-acetyl-alpha-D-muramoyl-L-alanyl-gamma-D-glutamyl-meso-2,6-diaminopimelate + ADP + phosphate + H(+). The protein operates within cell wall biogenesis; peptidoglycan biosynthesis. Functionally, catalyzes the addition of meso-diaminopimelic acid to the nucleotide precursor UDP-N-acetylmuramoyl-L-alanyl-D-glutamate (UMAG) in the biosynthesis of bacterial cell-wall peptidoglycan. This Corynebacterium glutamicum (strain ATCC 13032 / DSM 20300 / JCM 1318 / BCRC 11384 / CCUG 27702 / LMG 3730 / NBRC 12168 / NCIMB 10025 / NRRL B-2784 / 534) protein is UDP-N-acetylmuramoyl-L-alanyl-D-glutamate--2,6-diaminopimelate ligase.